We begin with the raw amino-acid sequence, 30 residues long: Propionyl-CoA carboxylase alpha chain (30 aa).

Residues 1 to 30 (PKIRKVLVANRGEIAIRVMRTXKELGIATV) enclose the Biotin carboxylation domain.

As to quaternary structure, dodecamer composed of six biotin-containing alpha subunits and six beta subunits. Mg(2+) serves as cofactor. It depends on Mn(2+) as a cofactor. Requires biotin as cofactor.

The enzyme catalyses propanoyl-CoA + hydrogencarbonate + ATP = (S)-methylmalonyl-CoA + ADP + phosphate + H(+). Its pathway is metabolic intermediate metabolism; propanoyl-CoA degradation; succinyl-CoA from propanoyl-CoA: step 1/3. Its function is as follows. This is one of the 2 subunits of the biotin-dependent propionyl-CoA carboxylase (PCC), the enzyme catalyzing the carboxylation of propionyl-CoA/propanoyl-CoA to D-methylmalonyl-CoA/(S)-methylmalonyl-CoA. Within the holoenzyme, the alpha subunit catalyzes the ATP-dependent carboxylation of the biotin carried by the biotin carboxyl carrier (BCC) domain, while the beta subunit then transfers the carboxyl group from carboxylated biotin to propionyl-CoA. Propionyl-CoA carboxylase also carboxylates acetyl-CoA, butyryl-CoA and succinyl-CoA. This is Propionyl-CoA carboxylase alpha chain from Myxococcus xanthus.